The primary structure comprises 209 residues: Protein-L-isoaspartate O-methyltransferase (209 aa).

Residue serine 60 is part of the active site.

It belongs to the methyltransferase superfamily. L-isoaspartyl/D-aspartyl protein methyltransferase family.

Its subcellular location is the cytoplasm. The enzyme catalyses [protein]-L-isoaspartate + S-adenosyl-L-methionine = [protein]-L-isoaspartate alpha-methyl ester + S-adenosyl-L-homocysteine. In terms of biological role, catalyzes the methyl esterification of L-isoaspartyl residues in peptides and proteins that result from spontaneous decomposition of normal L-aspartyl and L-asparaginyl residues. It plays a role in the repair and/or degradation of damaged proteins. The sequence is that of Protein-L-isoaspartate O-methyltransferase from Photobacterium profundum (strain SS9).